The following is a 461-amino-acid chain: MVTLSSPSVIAGGRDIDSTGYAWWSGNARLINLSGKLLGAHVAHAGLIVFWAGAMTLFEVAHFVPEKPMYEQGIILLSHLATLGWGVGPGGEVVDTFPYFVVGVLHLISSAVLGLGGIYHALRGPESLEEYSTFFSQDWKDKNQMTNIIGYHLILLGLGAFLLVFKAMFFGGVYDTWAPGGGDVRIISNPTLNPAVIFGYLLKSPFGGDGWIVSVDNLEDVIGGHIWIGLICISGGIWHILTKPFGWVRRAFIWNGEAYLSYSLGALSLMGFIASTMVWYNNTVYPSEFFGPTAAEASQSQAFTFLVRDQRLGANIGSAQGPTGLGKYLMRSPTGEIIFGGETMRFWDFRGPWLEPLRGPNGLDLDKLTNDIQPWQARRAAEYMTHAPLGSLNSVGGVATEINSVNFVSPRAWLATSHFVLAFFFLVGHLWHAGRARAAAAGFEKGIDRATEPVLAMRDLD.

5 helical membrane-spanning segments follow: residues 57–81 (LFEV…SHLA), 122–143 (LRGP…KDKN), 166–188 (KAMF…RIIS), 243–263 (KPFG…LSYS), and 279–300 (WYNN…ASQS). Residue Glu355 participates in [CaMn4O5] cluster binding. A helical transmembrane segment spans residues 435–459 (RARAAAAGFEKGIDRATEPVLAMRD).

It belongs to the PsbB/PsbC family. PsbC subfamily. In terms of assembly, PSII is composed of 1 copy each of membrane proteins PsbA, PsbB, PsbC, PsbD, PsbE, PsbF, PsbH, PsbI, PsbJ, PsbK, PsbL, PsbM, PsbT, PsbX, PsbY, PsbZ, Psb30/Ycf12, peripheral proteins PsbO, CyanoQ (PsbQ), PsbU, PsbV and a large number of cofactors. It forms dimeric complexes. Binds multiple chlorophylls and provides some of the ligands for the Ca-4Mn-5O cluster of the oxygen-evolving complex. It may also provide a ligand for a Cl- that is required for oxygen evolution. PSII binds additional chlorophylls, carotenoids and specific lipids. serves as cofactor.

It localises to the cellular thylakoid membrane. In terms of biological role, one of the components of the core complex of photosystem II (PSII). It binds chlorophyll and helps catalyze the primary light-induced photochemical processes of PSII. PSII is a light-driven water:plastoquinone oxidoreductase, using light energy to abstract electrons from H(2)O, generating O(2) and a proton gradient subsequently used for ATP formation. In Synechococcus elongatus (strain ATCC 33912 / PCC 7942 / FACHB-805) (Anacystis nidulans R2), this protein is Photosystem II CP43 reaction center protein.